A 662-amino-acid polypeptide reads, in one-letter code: Interferon-induced GTP-binding protein Mx1 (662 aa).

M1 is subject to N-acetylmethionine. Residues 67-340 enclose the Dynamin-type G domain; it reads DLALPAIAVI…LITHICKSLP (274 aa). Residues 77–84 form a G1 motif region; sequence GDQSSGKS. Residue 77–84 participates in GTP binding; it reads GDQSSGKS. Residues 102–104 form a G2 motif region; it reads VTR. The tract at residues 178 to 181 is G3 motif; that stretch reads DLPG. Residues 178–182 and 247–250 each bind GTP; these read DLPGI and TKPD. The segment at 247–250 is G4 motif; that stretch reads TKPD. Residues 279 to 282 are G5 motif; the sequence is KCRG. A bundle signaling element (BSE) region spans residues 341 to 366; sequence LLENQIRESHQRITEELQKYGVDVPE. A middle domain region spans residues 366–533; the sequence is EDENEKMFFL…HFQMEQIVYC (168 aa). The tract at residues 367–632 is stalk; sequence DENEKMFFLI…KDTYSWLLKE (266 aa). The tract at residues 554 to 557 is critical for lipid-binding; that stretch reads KKKK. One can recognise a GED domain in the interval 574-662; sequence MEEIFQHLMA…ARRRLAQFPG (89 aa).

It belongs to the TRAFAC class dynamin-like GTPase superfamily. Dynamin/Fzo/YdjA family. As to quaternary structure, homooligomer. Oligomerizes into multimeric filamentous or ring-like structures by virtue of its stalk domain. Oligomerization is critical for GTPase activity, protein stability, and recognition of viral target structures. Interacts with TRPC1, TRPC3, TRPC4, TRPC5, TRPC6 and TRPC7. Interacts with HSPA5. Interacts with TUBB/TUBB5. Interacts with DDX39A and DDX39B. ISGylated.

It is found in the cytoplasm. It localises to the endoplasmic reticulum membrane. Its subcellular location is the perinuclear region. In terms of biological role, interferon-induced dynamin-like GTPase with antiviral activity. The polypeptide is Interferon-induced GTP-binding protein Mx1 (MX1) (Pongo abelii (Sumatran orangutan)).